The chain runs to 282 residues: Probable endonuclease 4 (282 aa).

Zn(2+) is bound by residues H69, H109, E145, D179, H182, H216, D229, H231, and E261.

Belongs to the AP endonuclease 2 family. It depends on Zn(2+) as a cofactor.

It catalyses the reaction Endonucleolytic cleavage to 5'-phosphooligonucleotide end-products.. Functionally, endonuclease IV plays a role in DNA repair. It cleaves phosphodiester bonds at apurinic or apyrimidinic (AP) sites, generating a 3'-hydroxyl group and a 5'-terminal sugar phosphate. This is Probable endonuclease 4 from Campylobacter hominis (strain ATCC BAA-381 / DSM 21671 / CCUG 45161 / LMG 19568 / NCTC 13146 / CH001A).